The primary structure comprises 202 residues: Nascent polypeptide-associated complex subunit alpha (202 aa).

Residues 1–19 (MADPRVEEIVEEETPKQTV) are compositionally biased toward basic and acidic residues. A disordered region spans residues 1–41 (MADPRVEEIVEEETPKQTVEDAGSDSESEAGEANIPAGAAV). The region spanning 45 to 110 (SRNEKKARKA…AKIEDLNSQA (66 aa)) is the NAC-A/B domain. Residues 117–127 (QLAAAEAAAGE) are compositionally biased toward low complexity. The tract at residues 117–165 (QLAAAEAAAGEHAGHDHEHDLGTKVPEAETKKEEEEDDGEPVDESGLEA) is disordered. Over residues 128-149 (HAGHDHEHDLGTKVPEAETKKE) the composition is skewed to basic and acidic residues. Over residues 150 to 162 (EEEDDGEPVDESG) the composition is skewed to acidic residues. Residues 163–202 (LEAKDIELVMAQANVSRKKAVKALRENDNDIVNSIMALSI) form the UBA domain.

Belongs to the NAC-alpha family. In terms of assembly, part of the nascent polypeptide-associated complex (NAC), consisting of egd2 and egd1. NAC associates with ribosomes via egd1.

It is found in the cytoplasm. The protein localises to the nucleus. In terms of biological role, component of the nascent polypeptide-associated complex (NAC), a dynamic component of the ribosomal exit tunnel, protecting the emerging polypeptides from interaction with other cytoplasmic proteins to ensure appropriate nascent protein targeting. The NAC complex also promotes mitochondrial protein import by enhancing productive ribosome interactions with the outer mitochondrial membrane and blocks the inappropriate interaction of ribosomes translating non-secretory nascent polypeptides with translocation sites in the membrane of the endoplasmic reticulum. Egd2 may also be involved in transcription regulation. The sequence is that of Nascent polypeptide-associated complex subunit alpha (egd2) from Aspergillus oryzae (strain ATCC 42149 / RIB 40) (Yellow koji mold).